Consider the following 537-residue polypeptide: Frizzled-4 (537 aa).

An N-terminal signal peptide occupies residues Met1–Gly36. Residues Phe37–Ser212 lie on the Extracellular side of the membrane. An FZ domain is found at Glu40–Gly161. 8 cysteine pairs are disulfide-bonded: Cys45-Cys106, Cys53-Cys99, Cys90-Cys128, Cys117-Cys158, Cys121-Cys145, Cys181-Cys200, Cys204-Cys282, and Cys302-Cys377. A glycan (N-linked (GlcNAc...) asparagine) is linked at Asn59. The N-linked (GlcNAc...) asparagine glycan is linked to Asn144. The helical transmembrane segment at Arg213–Ile243 threads the bilayer. Residues Asp244–Ser249 are Cytoplasmic-facing. Residues Tyr250 to Val275 traverse the membrane as a helical segment. Residues Gly276–Asn299 are Extracellular-facing. The chain crosses the membrane as a helical span at residues Thr300–Leu333. The Cytoplasmic portion of the chain corresponds to Lys334–Gly336. The chain crosses the membrane as a helical span at residues His337–Met365. At Arg366–Asn383 the chain is on the extracellular side. The chain crosses the membrane as a helical span at residues Leu384–Leu410. Topologically, residues Val411–Glu431 are cytoplasmic. Residues Arg432 to Ser460 traverse the membrane as a helical segment. Residues Asn461–Asn473 are Extracellular-facing. A helical transmembrane segment spans residues Met474–Ile495. The Cytoplasmic segment spans residues Trp496–Val537. Positions Lys499–Trp504 match the Lys-Thr-X-X-X-Trp motif, mediates interaction with the PDZ domain of Dvl family members motif. The PDZ-binding signature appears at Thr535 to Val537.

This sequence belongs to the G-protein coupled receptor Fz/Smo family. Interacts with MAGI3 and NDP. Component of a complex, at least composed of TSPAN12, FZD4 and norrin (NDP). Interacts (via FZ domain) with TSKU; TSKU competes with WNT2B for binding to FZD4, inhibiting Wnt signaling and repressing peripheral eye development. Interacts with glypican GPC3. Ubiquitinated by ZNRF3, leading to its degradation by the proteasome. Expressed in chondrocytes.

The protein localises to the cell membrane. Its function is as follows. Receptor for Wnt proteins. Most frizzled receptors are coupled to the beta-catenin (CTNNB1) canonical signaling pathway, which leads to the activation of disheveled proteins, inhibition of GSK-3 kinase, nuclear accumulation of beta-catenin (CTNNB1) and activation of Wnt target genes. Plays a critical role in retinal vascularization by acting as a receptor for Wnt proteins and norrin (NDP). In retina, it can be activated by Wnt protein-binding and also by Wnt-independent signaling via binding of norrin (NDP), promoting in both cases beta-catenin (CTNNB1) accumulation and stimulation of LEF/TCF-mediated transcriptional programs. A second signaling pathway involving PKC and calcium fluxes has been seen for some family members, but it is not yet clear if it represents a distinct pathway or if it can be integrated in the canonical pathway, as PKC seems to be required for Wnt-mediated inactivation of GSK-3 kinase. Both pathways seem to involve interactions with G-proteins. May be involved in transduction and intercellular transmission of polarity information during tissue morphogenesis and/or in differentiated tissues. Activation by Wnt5A stimulates PKC activity via a G-protein-dependent mechanism. The sequence is that of Frizzled-4 (Fzd4) from Mus musculus (Mouse).